A 65-amino-acid chain; its full sequence is Large ribosomal subunit protein uL30 (65 aa).

Belongs to the universal ribosomal protein uL30 family. In terms of assembly, part of the 50S ribosomal subunit.

The chain is Large ribosomal subunit protein uL30 from Brucella suis (strain ATCC 23445 / NCTC 10510).